The chain runs to 1010 residues: Trifunctional purine biosynthetic protein adenosine-3 (1010 aa).

The residue at position 2 (A2) is an N-acetylalanine. A Phosphoserine modification is found at S10. An ATP-grasp domain is found at 111–318 (KEFMDRHGIP…LYEVIQSTLD (208 aa)). ATP contacts are provided by residues 190–193 (EELL), E197, R220, and N229. Mg(2+) contacts are provided by E288 and N290. The residue at position 350 (K350) is an N6-acetyllysine. Residues 434–809 (SLTYKESGVD…HFSFEKKKAR (376 aa)) are AIRS domain. Position 440 is a phosphoserine (S440). T682 is subject to Phosphothreonine. Phosphoserine is present on residues S796 and S802. A GART domain region spans residues 810 to 1010 (VAVLISGTGS…NGKICWVKEE (201 aa)). Residue 818–820 (GSN) coordinates N(1)-(5-phospho-beta-D-ribosyl)glycinamide. (6R)-10-formyltetrahydrofolate is bound by residues R871, 896-899 (MRIL), and N913. H915 acts as the Proton donor in catalysis. Residue 947–951 (AEDVD) participates in (6R)-10-formyltetrahydrofolate binding. Position 977–980 (977–980 (KLAE)) interacts with N(1)-(5-phospho-beta-D-ribosyl)glycinamide.

In the N-terminal section; belongs to the GARS family. It in the central section; belongs to the AIR synthase family. The protein in the C-terminal section; belongs to the GART family. Homodimer. It depends on Mg(2+) as a cofactor. Mn(2+) serves as cofactor.

It carries out the reaction 5-phospho-beta-D-ribosylamine + glycine + ATP = N(1)-(5-phospho-beta-D-ribosyl)glycinamide + ADP + phosphate + H(+). It catalyses the reaction N(1)-(5-phospho-beta-D-ribosyl)glycinamide + (6R)-10-formyltetrahydrofolate = N(2)-formyl-N(1)-(5-phospho-beta-D-ribosyl)glycinamide + (6S)-5,6,7,8-tetrahydrofolate + H(+). The enzyme catalyses 2-formamido-N(1)-(5-O-phospho-beta-D-ribosyl)acetamidine + ATP = 5-amino-1-(5-phospho-beta-D-ribosyl)imidazole + ADP + phosphate + H(+). It participates in purine metabolism; IMP biosynthesis via de novo pathway; 5-amino-1-(5-phospho-D-ribosyl)imidazole from N(2)-formyl-N(1)-(5-phospho-D-ribosyl)glycinamide: step 2/2. The protein operates within purine metabolism; IMP biosynthesis via de novo pathway; N(1)-(5-phospho-D-ribosyl)glycinamide from 5-phospho-alpha-D-ribose 1-diphosphate: step 2/2. It functions in the pathway purine metabolism; IMP biosynthesis via de novo pathway; N(2)-formyl-N(1)-(5-phospho-D-ribosyl)glycinamide from N(1)-(5-phospho-D-ribosyl)glycinamide (10-formyl THF route): step 1/1. Its function is as follows. Trifunctional enzyme that catalyzes three distinct reactions as part of the 'de novo' inosine monophosphate biosynthetic pathway. The sequence is that of Trifunctional purine biosynthetic protein adenosine-3 (GART) from Homo sapiens (Human).